Here is a 372-residue protein sequence, read N- to C-terminus: Serine protease 44 (372 aa).

An N-terminal signal peptide occupies residues 1–25 (MAFQGCDCFGLLVWLLLLQTRLGKA). Topologically, residues 26–351 (RMVPGTPSLS…KELSRASCWK (326 aa)) are extracellular. The interval 31–72 (TPSLSPLPSENGLDDSGVNPQERPLTGMPETSLPRKPGDSTR) is disordered. A Peptidase S1 domain is found at 112-345 (IVGGRPAPAR…YRDWIIKELS (234 aa)). Cys-137 and Cys-153 are joined by a disulfide. Catalysis depends on charge relay system residues His-152 and Asp-197. Asn-208 is a glycosylation site (N-linked (GlcNAc...) asparagine). Cystine bridges form between Cys-231–Cys-303, Cys-262–Cys-283, and Cys-293–Cys-321. The Charge relay system role is filled by Ser-297. The helical transmembrane segment at 352–372 (LSGFLVLSVCLVLHLAIVVAL) threads the bilayer.

This sequence belongs to the peptidase S1 family. As to expression, testis-specific. Expressed by primary and secondary spermatocytes.

The protein localises to the membrane. It is found in the cytoplasm. Lacks protease activity in vitro. This chain is Serine protease 44, found in Mus musculus (Mouse).